Consider the following 60-residue polypeptide: UPF0434 protein Bpro_2950 (60 aa).

It belongs to the UPF0434 family.

The polypeptide is UPF0434 protein Bpro_2950 (Polaromonas sp. (strain JS666 / ATCC BAA-500)).